Reading from the N-terminus, the 543-residue chain is Chaperonin GroEL 2 (543 aa).

Residues 29 to 32 (TLGP), 86 to 90 (DGTTT), glycine 413, 477 to 479 (DAA), and aspartate 493 contribute to the ATP site. The disordered stretch occupies residues 523–543 (PQEPEPAAGGHGHGHQHGPGF). Over residues 534-543 (GHGHQHGPGF) the composition is skewed to basic residues.

This sequence belongs to the chaperonin (HSP60) family. Forms a cylinder of 14 subunits composed of two heptameric rings stacked back-to-back. Interacts with the co-chaperonin GroES.

It is found in the cytoplasm. The enzyme catalyses ATP + H2O + a folded polypeptide = ADP + phosphate + an unfolded polypeptide.. Its function is as follows. Together with its co-chaperonin GroES, plays an essential role in assisting protein folding. The GroEL-GroES system forms a nano-cage that allows encapsulation of the non-native substrate proteins and provides a physical environment optimized to promote and accelerate protein folding. The protein is Chaperonin GroEL 2 of Salinispora tropica (strain ATCC BAA-916 / DSM 44818 / JCM 13857 / NBRC 105044 / CNB-440).